Consider the following 257-residue polypeptide: Hydroxypyruvate/pyruvate aldolase (257 aa).

H48 functions as the Proton acceptor in the catalytic mechanism. Positions 152 and 178 each coordinate a divalent metal cation.

This sequence belongs to the HpcH/HpaI aldolase family. The cofactor is a divalent metal cation.

It catalyses the reaction D-glyceraldehyde + 3-hydroxypyruvate = 2-dehydro-D-gluconate. It carries out the reaction D-glyceraldehyde + pyruvate = 2-dehydro-3-deoxy-L-galactonate. The enzyme catalyses 2-dehydro-3-deoxy-D-gluconate = D-glyceraldehyde + pyruvate. Functionally, aldolase which can catalyze in vitro the aldolisation reaction between hydroxypyruvate (HPA) or pyruvate (PA) and D-glyceraldehyde (D-GA). The condensation of hydroxypyruvate and D-glyceraldehyde produces 2-dehydro-D-gluconate as the major product. The condensation of pyruvate and D-glyceraldehyde produces 2-dehydro-3-deoxy-L-galactonate as the major product and 2-dehydro-3-deoxy-D-gluconate. This Roseovarius nubinhibens (strain ATCC BAA-591 / DSM 15170 / ISM) protein is Hydroxypyruvate/pyruvate aldolase.